Reading from the N-terminus, the 78-residue chain is UPF0248 protein Msed_0897 (78 aa).

Belongs to the UPF0248 family.

The sequence is that of UPF0248 protein Msed_0897 from Metallosphaera sedula (strain ATCC 51363 / DSM 5348 / JCM 9185 / NBRC 15509 / TH2).